Consider the following 202-residue polypeptide: Putative scarecrow-like protein 16 (202 aa).

Residues 1 to 26 (MQIPTLIDSMANKLHKKPPPLLKLTV) are VHIID. One can recognise a GRAS domain in the interval 1–202 (MQIPTLIDSM…RVERLEPKSR (202 aa)). Residues 45–82 (ELGSKLVNFATTRNVAMEFRIISSSYSDGLSSLIEQLR) form a leucine repeat II (LRII) region. The tract at residues 92 to 184 (LVVNCHMMLH…EADISWKIDN (93 aa)) is PFYRE. An SAW region spans residues 187–202 (AKEGAERVERLEPKSR).

This sequence belongs to the GRAS family. In terms of tissue distribution, expressed in seedlings, leaves and flowers.

Its subcellular location is the nucleus. In terms of biological role, probable transcription factor involved in plant development. This Arabidopsis thaliana (Mouse-ear cress) protein is Putative scarecrow-like protein 16 (SCL16).